Consider the following 63-residue polypeptide: Sarcotoxin-1A (63 aa).

Residues 1-23 (MNFQNIFIFVALILAVFAGQSQA) form the signal peptide. The residue at position 62 (Arg62) is an Arginine amide.

This sequence belongs to the cecropin family.

It localises to the secreted. In terms of biological role, sarcotoxins, which are potent bactericidal proteins, are produced in response to injury. They are cytotoxic to both Gram-positive and Gram-negative bacteria. The sequence is that of Sarcotoxin-1A from Sarcophaga peregrina (Flesh fly).